A 261-amino-acid polypeptide reads, in one-letter code: tRNA pseudouridine synthase A (261 aa).

D51 (nucleophile) is an active-site residue. A substrate-binding site is contributed by Y109.

It belongs to the tRNA pseudouridine synthase TruA family. Homodimer.

The catalysed reaction is uridine(38/39/40) in tRNA = pseudouridine(38/39/40) in tRNA. In terms of biological role, formation of pseudouridine at positions 38, 39 and 40 in the anticodon stem and loop of transfer RNAs. This is tRNA pseudouridine synthase A from Shewanella sp. (strain W3-18-1).